Consider the following 302-residue polypeptide: Sulfate adenylyltransferase subunit 2 (302 aa).

Positions 280–302 (RQGRAIDHDQSGSMELKKRQGYF) are disordered.

The protein belongs to the PAPS reductase family. CysD subfamily. As to quaternary structure, heterodimer composed of CysD, the smaller subunit, and CysN.

It catalyses the reaction sulfate + ATP + H(+) = adenosine 5'-phosphosulfate + diphosphate. Its pathway is sulfur metabolism; hydrogen sulfide biosynthesis; sulfite from sulfate: step 1/3. Its function is as follows. With CysN forms the ATP sulfurylase (ATPS) that catalyzes the adenylation of sulfate producing adenosine 5'-phosphosulfate (APS) and diphosphate, the first enzymatic step in sulfur assimilation pathway. APS synthesis involves the formation of a high-energy phosphoric-sulfuric acid anhydride bond driven by GTP hydrolysis by CysN coupled to ATP hydrolysis by CysD. This Vibrio atlanticus (strain LGP32) (Vibrio splendidus (strain Mel32)) protein is Sulfate adenylyltransferase subunit 2.